Here is a 489-residue protein sequence, read N- to C-terminus: MDPVVVLVLCLSCCLLLSLWKQSSRKGKLPPGPTPLPFIGNILQLDKDINKSLSNLSKAYGPVFTLYFGMKPTVVLHGYDAVKETLIDLGEEFSARGRFPIAEKVSGGHGIIFTSGNRWKEMRRFALTTLRNLGMGKSDLESRVQEEACYLVEELRKTNALPCDPTFVLGCASCNVICSIIFQNRFDYTDQTLIGFLEKLNENFRILSSPWIQAYNSFPALLHYLPGSHNTIFKNFAFIKSYILEKIKEHQESFDVNNPRDFIDYFLIKMEQEKHNQPLEFTFENLKTIATDLFGAGTETTSTTLRYGLLLLLKHPEVTVKVQEEIDRVIGRHQSPHMQDRSRMPYTNAVLHEIQRYIDLVPNSLPHAVTCDVKFRNYVIPKGTTILISLSSVLSDEKEFPRPEIFDPAHFLDDSGNFKKSDYFMAFSAGKRICVGEGLARMELFLFLTTILQKFTLKPLVDPKDIDTTPLASGFGHVPPTYQLCFIPV.

A heme-binding site is contributed by cysteine 434.

It belongs to the cytochrome P450 family. It depends on heme as a cofactor.

The protein resides in the endoplasmic reticulum membrane. It localises to the microsome membrane. It carries out the reaction an organic molecule + reduced [NADPH--hemoprotein reductase] + O2 = an alcohol + oxidized [NADPH--hemoprotein reductase] + H2O + H(+). Cytochromes P450 are a group of heme-thiolate monooxygenases. In liver microsomes, this enzyme is involved in an NADPH-dependent electron transport pathway. It oxidizes a variety of structurally unrelated compounds, including steroids, fatty acids, and xenobiotics. The polypeptide is Cytochrome P450 2C41 (CYP2C41) (Canis lupus familiaris (Dog)).